Reading from the N-terminus, the 426-residue chain is Serine--tRNA ligase (426 aa).

Residue threonine 233–glutamate 235 coordinates L-serine. ATP is bound at residue arginine 264–glutamate 266. Glutamate 287 is a binding site for L-serine. An ATP-binding site is contributed by glutamate 351–serine 354. Serine 386 provides a ligand contact to L-serine.

Belongs to the class-II aminoacyl-tRNA synthetase family. Type-1 seryl-tRNA synthetase subfamily. As to quaternary structure, homodimer. The tRNA molecule binds across the dimer.

Its subcellular location is the cytoplasm. It catalyses the reaction tRNA(Ser) + L-serine + ATP = L-seryl-tRNA(Ser) + AMP + diphosphate + H(+). It carries out the reaction tRNA(Sec) + L-serine + ATP = L-seryl-tRNA(Sec) + AMP + diphosphate + H(+). The protein operates within aminoacyl-tRNA biosynthesis; selenocysteinyl-tRNA(Sec) biosynthesis; L-seryl-tRNA(Sec) from L-serine and tRNA(Sec): step 1/1. Functionally, catalyzes the attachment of serine to tRNA(Ser). Is also able to aminoacylate tRNA(Sec) with serine, to form the misacylated tRNA L-seryl-tRNA(Sec), which will be further converted into selenocysteinyl-tRNA(Sec). The sequence is that of Serine--tRNA ligase from Prochlorococcus marinus (strain NATL2A).